The primary structure comprises 874 residues: MSIQSILRKETLKKKDKNIDLQENNINDLVVSASRVIAPLWPISTFAAHHPWMGLEKQSFERVANWLKEARNVDIYPSASMIHSAKAKGEIEESFLQMALSRWLDSQSFHIPRKKVEQFCQAALKLEELPSSLLSSPQLNKLAEEMSYINTESMKDSFLQPVSSFIENQKGENLSDILNYHIIKWCKLYLDDSGSSWTMPNREQGLYRAWHHLIKFDPALSKTERKVLKDWPEDALIALTKALSELGISESNMQAYLEGHLLSLPGWAGMVRWRSQQSIEEQELLIEYLAVRLSMELAVVKPYLPLKNQKVEKKVSIVPLIASWIYWGDISTREWLQMSATEQSELLAFAYRFDENIRKKLWLEAWEQTHAEQLKKKISSKQRATNDKKRVVAQLAFCIDVRSEPFRRHLEKLGPFETFGIAGFFGLPIATTELGSNDSHPSLPVILKPKHQIKELTDENECKSYEQRKMVGSSVRYTFKTMKQNVLTSMLLPEVSGPLLGLQMVTRSFVPRRVGGFIRNLRKNMLQKPDTTFSLNHVHDTNCEIPIGFTKEEKVNYVRQALKMVGLTEGFAPLVVMCGHSSQSTNNPYAAALECGACGGAAGGFNARVFATLCNLPEVREALSAEGIKIPDDTIFAAAEHKTTVDELEWIYVPELSETAQEAFDCIEAIMPNVSQHANRERLMQLPNFKTKIKNPSKEAHRFAEDWSEIRPEWGLARNASFIIGQRELTQDCDLEGRAFLHNYDWKQDERGDILANIIAGPGTVAQWINLQYYASTVAPHYYGSGNKTTQTVTAGLGVMQGNASDLLPGLPWQSVMQSDRETYHSPLRLLIVIQAPTKYIEHLLNNDFTFREKVQNGWVRLASVDPEGRWKNW.

Zn(2+) is bound by residues C398, D400, H580, and C595.

It belongs to the inorganic carbon transporter (TC 9.A.2) DabA family. Forms a complex with DabB. It depends on Zn(2+) as a cofactor.

The protein localises to the cell membrane. In terms of biological role, part of an energy-coupled inorganic carbon pump. The sequence is that of Probable inorganic carbon transporter subunit DabA from Bacillus cereus (strain 03BB102).